The following is a 459-amino-acid chain: Protein YTP1 (459 aa).

Over 1–6 (MTAANK) the chain is Extracellular. A helical transmembrane segment spans residues 7–27 (NIVFGFSRSISAILLICFFFE). The Cytoplasmic portion of the chain corresponds to 28–59 (KVCGDMEHDMGMDDTSGYTRPEIVQAGSKSFH). Residues 60-80 (WLCTLGFLLLLPSVVTCLSFA) traverse the membrane as a helical segment. Topologically, residues 81-82 (GR) are extracellular. The helical transmembrane segment at 83-103 (IYSATLLQCTCAVYAFLEAAV) threads the bilayer. Residues 104–122 (LRFQDNDGVENRTSRGTAW) are Cytoplasmic-facing. A helical membrane pass occupies residues 123–143 (FLVGLTWITLFFGGLAGGTGF). Residues 144-170 (LVKSKRLQTFISNAGEKRLSYIHRGLS) lie on the Extracellular side of the membrane. A helical transmembrane segment spans residues 171–191 (FLTVLTGWVKVCLAPVALFGF). Topologically, residues 192–205 (CREAHTGQCIAHGI) are cytoplasmic. The chain crosses the membrane as a helical span at residues 206–226 (MGSAFVLYGFIYVLVLVIPWI). Topologically, residues 227–266 (RSAQTSYSQDYVDSWVMCIWGVVNTFTEHRWGREGWSVHD) are extracellular. A helical membrane pass occupies residues 267–287 (YQHTFMGIIWWTGGILGIFLS). At 288 to 295 (RNGRRTFV) the chain is on the cytoplasmic side. Residues 296–316 (PSLIIIFTGWAMSEHAQHLII) traverse the membrane as a helical segment. Over 317–322 (STKVHN) the chain is Extracellular. Residues 323 to 343 (MFGLVLMCGGALRIIEISFLL) traverse the membrane as a helical segment. The Cytoplasmic segment spans residues 344–351 (RDKRTLDK). A helical membrane pass occupies residues 352-372 (IHSFQYLAPFCLVCSGLLFMG). At 373-389 (ANEEQLILVLRLGGDHS) the chain is on the extracellular side. The chain crosses the membrane as a helical span at residues 390–410 (AYVLIIVSGAFLVYFWMIACL). Residues 411–459 (EFYLYLLEKGKQGFLPKSYELEEENNNVSFELDNISNEDVDEDTTPFNV) lie on the Cytoplasmic side of the membrane.

The protein resides in the membrane. The polypeptide is Protein YTP1 (YTP1) (Saccharomyces cerevisiae (strain ATCC 204508 / S288c) (Baker's yeast)).